The following is a 458-amino-acid chain: uncharacterized protein (458 aa).

12 helical membrane-spanning segments follow: residues 26–46 (LIAI…KSIH), 47–67 (FAGP…FLIM), 95–115 (AAFI…MADL), 125–145 (WLPG…LLIM), 160–180 (FALI…VMIF), 208–228 (GFIL…LVGL), 251–271 (VLLF…WDII), 278–298 (FVQV…NFVV), 342–362 (ALFF…IMPE), 365–385 (FTLI…ITVI), 409–429 (PFTN…LALA), and 432–452 (TRVS…IYKV).

The protein belongs to the amino acid-polyamine-organocation (APC) superfamily.

It localises to the cell membrane. Functionally, probable amino-acid or metabolite transport protein. This is an uncharacterized protein from Bacillus subtilis (strain 168).